The primary structure comprises 206 residues: TPR repeat-containing protein YrrB (206 aa).

6 TPR repeats span residues 1 to 23 (MQEG…NKED), 24 to 57 (AIPY…DSSA), 59 to 91 (TAYY…GMEN), 93 to 125 (DLFY…NEND), 127 to 159 (EARF…DPGH), and 160 to 193 (ADAF…QPDH).

In terms of assembly, monomer.

Functionally, could be an interacting mediator in the complex formation among RNA sulfuration components, RNA processing components, and aminoacyl-tRNA synthetases. The protein is TPR repeat-containing protein YrrB (yrrB) of Bacillus subtilis (strain 168).